A 355-amino-acid chain; its full sequence is MSVQRPIRVLVVDDSPTMANMLTALLTEEPRIEVVGRAGDGNRAVQLARLLRPDVITMDLLLPGLDGPGAIAAIMSQSPARILVVSAVAEQRGVDLGFQAMSAGALELIGKPNVTNAEELRRWGKELAHSVCLMAEVPVISRRPRAATAPPPPTGARVDIFGVVASTGGPPALADVLSKLPRSLPVPLLIAQHITVGFTQGMVRWLSQVTPLPVSIAKDGERLEPGRVYFPLDGHDLLVDAAGLARLQPSQGGPCPSGDVMLTSLAAAFGRRSGGVVLTGMGEDGARGLLAIRRAGGVTFSQDEASSVVFGMPRAALDVKATDQGVPLASMPELILQSCTFAPFRGGRPEGGPTR.

The Response regulatory domain maps to Arg8–Glu126. Asp59 is modified (4-aspartylphosphate). The CheB-type methylesterase domain occupies Pro152–Gln337. Residues Ser166, His193, and Asp284 contribute to the active site.

This sequence belongs to the CheB family. In terms of processing, phosphorylated by CheA. Phosphorylation of the N-terminal regulatory domain activates the methylesterase activity.

Its subcellular location is the cytoplasm. The enzyme catalyses [protein]-L-glutamate 5-O-methyl ester + H2O = L-glutamyl-[protein] + methanol + H(+). It carries out the reaction L-glutaminyl-[protein] + H2O = L-glutamyl-[protein] + NH4(+). In terms of biological role, involved in chemotaxis. Part of a chemotaxis signal transduction system that modulates chemotaxis in response to various stimuli. Catalyzes the demethylation of specific methylglutamate residues introduced into the chemoreceptors (methyl-accepting chemotaxis proteins or MCP) by CheR. Also mediates the irreversible deamidation of specific glutamine residues to glutamic acid. The chain is Protein-glutamate methylesterase/protein-glutamine glutaminase 3 from Myxococcus xanthus (strain DK1622).